The chain runs to 89 residues: Large ribosomal subunit protein bL27 (89 aa).

Positions 1-21 (MAHKKAGGSSRNGRDSAGRRL) are disordered.

This sequence belongs to the bacterial ribosomal protein bL27 family.

This chain is Large ribosomal subunit protein bL27, found in Roseobacter denitrificans (strain ATCC 33942 / OCh 114) (Erythrobacter sp. (strain OCh 114)).